The following is a 401-amino-acid chain: Adenosine 3'-phospho 5'-phosphosulfate transporter 2 (401 aa).

N12 and N71 each carry an N-linked (GlcNAc...) asparagine glycan. 6 consecutive transmembrane segments (helical) span residues 78 to 98 (LTQF…YGYL), 114 to 134 (YLTL…LQLI), 147 to 167 (MIIA…LGYL), 170 to 190 (PTQV…GVFI), 196 to 216 (NVAD…FTLA), and 223 to 243 (NFNL…AVIG). Residue N254 is glycosylated (N-linked (GlcNAc...) asparagine). 4 consecutive transmembrane segments (helical) span residues 267–287 (IGFV…PAVT), 298–317 (GYAF…VLAL), 324–346 (LIAV…IFFA), and 349–369 (FTFQ…LNVY).

Belongs to the nucleotide-sugar transporter family. SLC35B subfamily. As to expression, preferentially and highly expressed in colon.

The protein localises to the golgi apparatus membrane. It carries out the reaction 3'-phosphoadenylyl sulfate(in) + adenosine 3',5'-bisphosphate(out) = 3'-phosphoadenylyl sulfate(out) + adenosine 3',5'-bisphosphate(in). Probably functions as a 3'-phosphoadenylyl sulfate:adenosine 3',5'-bisphosphate antiporter at the Golgi membranes. Mediates the transport from the cytosol into the lumen of the Golgi of 3'-phosphoadenylyl sulfate/adenosine 3'-phospho 5'-phosphosulfate (PAPS), a universal sulfuryl donor for sulfation events that take place in that compartment. The polypeptide is Adenosine 3'-phospho 5'-phosphosulfate transporter 2 (Homo sapiens (Human)).